The sequence spans 232 residues: Nuclear transcription factor Y subunit nfyc-1 (232 aa).

Residues 191–232 (TVPTTSTNGPGHMSEDSFQDPNMHSDFHQRTSNSSVNRSHHN) form a disordered region. A compositionally biased stretch (polar residues) spans 220 to 232 (RTSNSSVNRSHHN).

It belongs to the NFYC/HAP5 subunit family. As to quaternary structure, forms two NF-Y heterotrimeric transcription factor complexes: the nfya-1-NF-Y complex is composed of nfya-1, nfyb-1 and nfyc-1, and the nfya-2-NF-Y complex is composed of nfya-2, nfyb-1 and nfyc-1. Interacts with nfyb-1; the interaction is direct and is required for the interaction with either nfya-1 or nfya-2, and subsequent binding of the complex to the 5'-CCAAT-3' box motif in DNA. Expressed in certain parts of the gonads with high expression in fertilized oocytes in the uterus and mature oocytes from the distal to the proximal arm of the gonad, but weak expression in the syncytial ovaries and immature oocytes at the beginning of the proximal arm of the gonad. Expressed in the excretory cell, secretory cells in the pharyngeal terminal bulb wall, in the small ganglia surrounding the pharynx and in the neurons running anteriorly to the sensory organs in the head. Not expressed in the intestine, the hypodermis or body wall muscle surrounding the pseudocoelomic space.

The protein resides in the nucleus. Its subcellular location is the cytoplasm. It is found in the perikaryon. Component of sequence-specific heterotrimeric transcription factor (nfya-1-NF-Y and nfya-2-NF-Y) complexes which specifically recognize a 5'-CCAAT-3' box motif found in the promoters of its target genes to regulate their expression and control cellular identity in particular tissue types. In association with the components in the NF-Y complexes, represses the expression of the T-box transcription factor tbx-2 throughout larval development, which most likely restricts its expression to certain tissues. May act to repress txb-2 expression in conjunction with tbx-2 itself, which has an autoregulatory role. In association with the components in the nfya-1-NF-Y complex, negatively regulates the expression of the homeobox protein egl-5 to spatially restrict its expression in tissues such as the head. May regulate egl-5 expression in association with the mes-2-mes-3-mes-6 complex. In Caenorhabditis elegans, this protein is Nuclear transcription factor Y subunit nfyc-1.